We begin with the raw amino-acid sequence, 155 residues long: Telokin-like protein 20 homolog (155 aa).

The tract at residues 109–155 (KRAVAPPHHEPEPVPAEEGAVADRAEPESGDAPPSPKKQKLDEREQD) is disordered.

This is Telokin-like protein 20 homolog from Orgyia pseudotsugata multicapsid polyhedrosis virus (OpMNPV).